Reading from the N-terminus, the 447-residue chain is Hemopexin (447 aa).

Positions 1–18 (MRLIQALSLCLALSLSLA) are cleaved as a signal peptide. The interval 20 to 44 (PPQHKEDHSHKGKPGGEGHKHELHH) is disordered. Over residues 22-44 (QHKEDHSHKGKPGGEGHKHELHH) the composition is skewed to basic and acidic residues. 8 Hemopexin repeats span residues 53–93 (GIEF…FPEL), 99–151 (LGHV…FPGI), 152–197 (PDHL…FKSM), 198–243 (PNCT…FMRC), 262–304 (RVHL…FKEL), 305–351 (HSEV…VLGI), 352–395 (EGPV…TITQ), and 396–441 (FKRI…VSQQ). The N-linked (GlcNAc...) asparagine glycan is linked to Asn-87. Asn-168 and Asn-199 each carry an N-linked (GlcNAc...) asparagine glycan. His-293 serves as a coordination point for heme.

It belongs to the hemopexin family.

The protein localises to the secreted. Functionally, binds heme and transports it to the liver for breakdown and iron recovery, after which the free hemopexin returns to the circulation. This chain is Hemopexin, found in Danio rerio (Zebrafish).